The chain runs to 119 residues: Dihydroneopterin aldolase (119 aa).

Substrate is bound by residues Glu21, Tyr53, and 72-73 (VE). Lys98 (proton donor/acceptor) is an active-site residue.

It belongs to the DHNA family.

It catalyses the reaction 7,8-dihydroneopterin = 6-hydroxymethyl-7,8-dihydropterin + glycolaldehyde. It functions in the pathway cofactor biosynthesis; tetrahydrofolate biosynthesis; 2-amino-4-hydroxy-6-hydroxymethyl-7,8-dihydropteridine diphosphate from 7,8-dihydroneopterin triphosphate: step 3/4. Its function is as follows. Catalyzes the conversion of 7,8-dihydroneopterin to 6-hydroxymethyl-7,8-dihydropterin. This is Dihydroneopterin aldolase (folB) from Streptomyces coelicolor (strain ATCC BAA-471 / A3(2) / M145).